A 197-amino-acid polypeptide reads, in one-letter code: RILP-like protein 2 (197 aa).

An RH1 domain is found at Glu14–Ala96. Positions Leu65–Ser153 form a coiled coil. Positions Arg119 to Ile184 constitute an RH2 domain.

In terms of assembly, homodimer. Interacts (via N-terminus) with MYO5A, the interaction is required for its role in dendrite formation. Interacts with RAC1. Interacts with RAB8A; interaction is dependent on the phosphorylation of RAB8A on 'Thr-72'. Interacts with RAB10 and RAB12; interaction is dependent on the phosphorylation of 'Thr-73' on RAB10 and 'Ser-105' on RAB12.

It is found in the cytoplasm. It localises to the cytosol. Its subcellular location is the cytoskeleton. The protein localises to the microtubule organizing center. The protein resides in the centrosome. It is found in the cell projection. It localises to the cilium. Its function is as follows. Involved in cell shape and neuronal morphogenesis, positively regulating the establishment and maintenance of dendritic spines. Plays a role in cellular protein transport, including protein transport away from primary cilia. May function via activation of RAC1 and PAK1. The sequence is that of RILP-like protein 2 (Rilpl2) from Rattus norvegicus (Rat).